The primary structure comprises 130 residues: Putative ankyrin repeat protein R886 (130 aa).

3 ANK repeats span residues N21–A50, Y54–K83, and D85–Y113.

This Acanthamoeba polyphaga (Amoeba) protein is Putative ankyrin repeat protein R886.